Reading from the N-terminus, the 209-residue chain is MKTQNIPKATIKRLAVYIQVLTGLKRDGVEVISSEKLARACSVNPSQIRKDLAYFGEFGVRGVGYYVHELISSIKQSLGVDRVWGCALVGVGNLGRALLRHKEFALRGFSIRAAFDCDPYKIGEVVSGLEVVCTRQFKARVEELGLEIGIITTPPERAQRAANYLVDGGIKGIVNFAQARIDVPKNVPVEYVDFTHHFYSVAFNISSME.

Residues 16 to 55 (VYIQVLTGLKRDGVEVISSEKLARACSVNPSQIRKDLAYF) constitute a DNA-binding region (H-T-H motif). 90 to 95 (GVGNLG) is an NAD(+) binding site.

The protein belongs to the transcriptional regulatory Rex family. Homodimer.

The protein resides in the cytoplasm. In terms of biological role, modulates transcription in response to changes in cellular NADH/NAD(+) redox state. In Maridesulfovibrio salexigens (strain ATCC 14822 / DSM 2638 / NCIMB 8403 / VKM B-1763) (Desulfovibrio salexigens), this protein is Redox-sensing transcriptional repressor Rex.